The primary structure comprises 574 residues: Peptidyl-prolyl cis-trans isomerase FKBP9 (574 aa).

A signal peptide spans 1–26; it reads MAIRARSWRPPPPPLLLLLLWVTGQA. 4 consecutive PPIase FKBP-type domains span residues 58–146, 170–258, 282–369, and 393–481; these read GDFV…MDIW, SDFV…LDLH, GDFL…IDFH, and GDYL…LELV. Residues Asn178, Asn290, Asn306, and Asn401 are each glycosylated (N-linked (GlcNAc...) asparagine). EF-hand domains are found at residues 492 to 527 and 537 to 572; these read WNGE…QVAS and DAEM…TKHD. Residues Asp505, Asp507, Asp509, Glu511, Glu516, Asp550, Asn552, Asp554, Lys556, and Glu561 each contribute to the Ca(2+) site. The short motif at 571-574 is the Prevents secretion from ER element; the sequence is HDEL.

Phosphorylated.

The protein resides in the endoplasmic reticulum. The enzyme catalyses [protein]-peptidylproline (omega=180) = [protein]-peptidylproline (omega=0). Inhibited by FK506. Its function is as follows. PPIases accelerate the folding of proteins during protein synthesis. This Bos taurus (Bovine) protein is Peptidyl-prolyl cis-trans isomerase FKBP9 (FKBP9).